The sequence spans 646 residues: Mitochondrial distribution and morphology protein 10 (646 aa).

2 disordered regions span residues 206-230 (KSTSSSMDRLDSSNPSLSSSTSLSN) and 315-347 (ETSSSASYPQRNGSVLHTGSSSSSEDTEAGGGL). The span at 207 to 230 (STSSSMDRLDSSNPSLSSSTSLSN) shows a compositional bias: low complexity. A compositionally biased stretch (polar residues) spans 315–333 (ETSSSASYPQRNGSVLHTG).

It belongs to the MDM10 family. In terms of assembly, component of the ER-mitochondria encounter structure (ERMES) or MDM complex, composed of MMM1, MDM10, MDM12 and MDM34. Associates with the mitochondrial outer membrane sorting assembly machinery SAM(core) complex.

Its subcellular location is the mitochondrion outer membrane. Its function is as follows. Component of the ERMES/MDM complex, which serves as a molecular tether to connect the endoplasmic reticulum and mitochondria. Components of this complex are involved in the control of mitochondrial shape and protein biogenesis and may function in phospholipid exchange. MDM10 is involved in the late assembly steps of the general translocase of the mitochondrial outer membrane (TOM complex). Functions in the TOM40-specific route of the assembly of outer membrane beta-barrel proteins, including the association of TOM40 with the receptor TOM22 and small TOM proteins. Can associate with the SAM(core) complex as well as the MDM12-MMM1 complex, both involved in late steps of the major beta-barrel assembly pathway, that is responsible for biogenesis of all outer membrane beta-barrel proteins. May act as a switch that shuttles between both complexes and channels precursor proteins into the TOM40-specific pathway. Plays a role in mitochondrial morphology and in the inheritance of mitochondria. The polypeptide is Mitochondrial distribution and morphology protein 10 (Mycosarcoma maydis (Corn smut fungus)).